Reading from the N-terminus, the 213-residue chain is ATP-dependent dethiobiotin synthetase BioD (213 aa).

12–17 (NVGKTF) serves as a coordination point for ATP. Mg(2+) is bound at residue threonine 16. The active site involves lysine 36. Residue serine 40 participates in substrate binding. ATP is bound by residues aspartate 53, 110-113 (EGTG), and 170-171 (NQ). Residues aspartate 53 and glutamate 110 each contribute to the Mg(2+) site.

It belongs to the dethiobiotin synthetase family. As to quaternary structure, homodimer. Mg(2+) is required as a cofactor.

It localises to the cytoplasm. The catalysed reaction is (7R,8S)-7,8-diammoniononanoate + CO2 + ATP = (4R,5S)-dethiobiotin + ADP + phosphate + 3 H(+). Its pathway is cofactor biosynthesis; biotin biosynthesis; biotin from 7,8-diaminononanoate: step 1/2. Its function is as follows. Catalyzes a mechanistically unusual reaction, the ATP-dependent insertion of CO2 between the N7 and N8 nitrogen atoms of 7,8-diaminopelargonic acid (DAPA, also called 7,8-diammoniononanoate) to form a ureido ring. The protein is ATP-dependent dethiobiotin synthetase BioD of Ruthia magnifica subsp. Calyptogena magnifica.